The chain runs to 306 residues: Ornithine carbamoyltransferase (306 aa).

Residues 51–54 (STRT), Gln78, Arg102, and 129–132 (HPCQ) each bind carbamoyl phosphate. L-ornithine contacts are provided by residues Asn160, Asp223, and 227 to 228 (SM). Carbamoyl phosphate contacts are provided by residues 263-264 (CL) and Arg291.

It belongs to the aspartate/ornithine carbamoyltransferase superfamily. OTCase family.

It is found in the cytoplasm. The catalysed reaction is carbamoyl phosphate + L-ornithine = L-citrulline + phosphate + H(+). The protein operates within amino-acid biosynthesis; L-arginine biosynthesis; L-arginine from L-ornithine and carbamoyl phosphate: step 1/3. In terms of biological role, reversibly catalyzes the transfer of the carbamoyl group from carbamoyl phosphate (CP) to the N(epsilon) atom of ornithine (ORN) to produce L-citrulline. This is Ornithine carbamoyltransferase from Trichormus variabilis (strain ATCC 29413 / PCC 7937) (Anabaena variabilis).